A 471-amino-acid polypeptide reads, in one-letter code: Heparan-sulfate 6-O-sulfotransferase 3 (471 aa).

Residues 1-4 (MDER) are Cytoplasmic-facing. The helical; Signal-anchor for type II membrane protein transmembrane segment at 5 to 27 (FNKWLLTPVLTLLFVVIMYQYVS) threads the bilayer. Residues 28–471 (PSCTSSCTNF…EDYNSQVVRW (444 aa)) are Lumenal-facing. The segment at 39 to 122 (EQPRAGEAGP…EAPENGSLPR (84 aa)) is disordered. Residues 41-62 (PRAGEAGPPAVPGPARRAQAPP) are compositionally biased toward low complexity. Residues 70 to 81 (QLPPPPRGPPEG) are compositionally biased toward pro residues. Residues 88–114 (PEEEDEEPGDPREGEEEEEEDEPDPEA) show a composition bias toward acidic residues. 2 N-linked (GlcNAc...) asparagine glycosylation sites follow: Asn117 and Asn128. A 3'-phosphoadenylyl sulfate-binding site is contributed by 152-160 (HIQKTGGTT). Substrate is bound by residues 182–183 (KK), Arg199, Trp204, and His209. His209 serves as the catalytic Proton acceptor. The N-linked (GlcNAc...) asparagine glycan is linked to Asn231. 3'-phosphoadenylyl sulfate-binding residues include Arg245 and Ser253. 2 residues coordinate substrate: His257 and Trp264. N-linked (GlcNAc...) asparagine glycans are attached at residues Asn324 and Asn329. 377–379 (TQF) contributes to the 3'-phosphoadenylyl sulfate binding site. Asn380 carries N-linked (GlcNAc...) asparagine glycosylation. Residue 383–384 (RA) participates in 3'-phosphoadenylyl sulfate binding. Residues 422–471 (TKQLEHQRDRQKRREERRLQREHRDHQWPKEDGAAEGTVTEDYNSQVVRW) form a disordered region. Residues 423–454 (KQLEHQRDRQKRREERRLQREHRDHQWPKEDG) show a composition bias toward basic and acidic residues. The segment covering 462–471 (EDYNSQVVRW) has biased composition (polar residues).

Belongs to the sulfotransferase 6 family.

Its subcellular location is the membrane. The catalysed reaction is alpha-D-glucosaminyl-[heparan sulfate](n) + 3'-phosphoadenylyl sulfate = 6-sulfo-alpha-D-glucosaminyl-[heparan sulfate](n) + adenosine 3',5'-bisphosphate + H(+). Its function is as follows. 6-O-sulfation enzyme which catalyzes the transfer of sulfate from 3'-phosphoadenosine 5'-phosphosulfate (PAPS) to position 6 of the N-sulfoglucosamine residue (GlcNS) of heparan sulfate. In Homo sapiens (Human), this protein is Heparan-sulfate 6-O-sulfotransferase 3 (HS6ST3).